The primary structure comprises 546 residues: NAD(P)H-quinone oxidoreductase chain 4 (546 aa).

Transmembrane regions (helical) follow at residues 17–37, 48–68, 103–123, 127–147, 149–169, 181–201, 222–242, 256–276, 290–310, 327–347, 348–368, 389–409, 430–450, and 477–497; these read VPWL…VPFI, WYAL…YLNG, LILL…PVSF, LFYF…AVQD, LLFF…LAIW, FILY…AMGF, GFQL…LPIV, TAPV…YALL, FAPL…LTSF, MGFV…GAML, QMIS…ATYD, FALW…SGFV, VVIC…LLSM, and VYII…PRLM.

It belongs to the complex I subunit 4 family.

It is found in the cellular thylakoid membrane. It carries out the reaction a plastoquinone + NADH + (n+1) H(+)(in) = a plastoquinol + NAD(+) + n H(+)(out). The catalysed reaction is a plastoquinone + NADPH + (n+1) H(+)(in) = a plastoquinol + NADP(+) + n H(+)(out). Its function is as follows. NDH-1 shuttles electrons from NAD(P)H, via FMN and iron-sulfur (Fe-S) centers, to quinones in the respiratory chain. The immediate electron acceptor for the enzyme in this species is believed to be plastoquinone. Couples the redox reaction to proton translocation (for every two electrons transferred, four hydrogen ions are translocated across the cytoplasmic membrane), and thus conserves the redox energy in a proton gradient. In Parasynechococcus marenigrum (strain WH8102), this protein is NAD(P)H-quinone oxidoreductase chain 4.